Consider the following 439-residue polypeptide: Ribosomal protein uS12 methylthiotransferase RimO (439 aa).

The MTTase N-terminal domain maps to 2–114; sequence SKLYLMSLGC…IDEMILKKTN (113 aa). Positions 11, 45, 77, 146, 150, and 153 each coordinate [4Fe-4S] cluster. The region spanning 132-363 is the Radical SAM core domain; sequence TGSNSHAFIK…VDEVIEKSFE (232 aa).

The protein belongs to the methylthiotransferase family. RimO subfamily. [4Fe-4S] cluster is required as a cofactor.

The protein resides in the cytoplasm. The enzyme catalyses L-aspartate(89)-[ribosomal protein uS12]-hydrogen + (sulfur carrier)-SH + AH2 + 2 S-adenosyl-L-methionine = 3-methylsulfanyl-L-aspartate(89)-[ribosomal protein uS12]-hydrogen + (sulfur carrier)-H + 5'-deoxyadenosine + L-methionine + A + S-adenosyl-L-homocysteine + 2 H(+). Catalyzes the methylthiolation of an aspartic acid residue of ribosomal protein uS12. The chain is Ribosomal protein uS12 methylthiotransferase RimO from Campylobacter jejuni subsp. jejuni serotype O:6 (strain 81116 / NCTC 11828).